Reading from the N-terminus, the 373-residue chain is DNA primase small subunit PriS (373 aa).

Catalysis depends on residues Asp95, Asp97, and Asp281.

The protein belongs to the eukaryotic-type primase small subunit family. As to quaternary structure, heterodimer of a small subunit (PriS) and a large subunit (PriL). Mg(2+) serves as cofactor. Requires Mn(2+) as cofactor.

Its function is as follows. Catalytic subunit of DNA primase, an RNA polymerase that catalyzes the synthesis of short RNA molecules used as primers for DNA polymerase during DNA replication. The small subunit contains the primase catalytic core and has DNA synthesis activity on its own. Binding to the large subunit stabilizes and modulates the activity, increasing the rate of DNA synthesis while decreasing the length of the DNA fragments, and conferring RNA synthesis capability. The DNA polymerase activity may enable DNA primase to also catalyze primer extension after primer synthesis. May also play a role in DNA repair. The protein is DNA primase small subunit PriS of Nitrosopumilus maritimus (strain SCM1).